Here is a 393-residue protein sequence, read N- to C-terminus: CCA-adding enzyme (393 aa).

ATP-binding residues include glycine 27 and arginine 30. Residues glycine 27 and arginine 30 each contribute to the CTP site. Aspartate 40 and aspartate 42 together coordinate Mg(2+). The ATP site is built by arginine 111, aspartate 154, arginine 157, arginine 160, and arginine 163. The CTP site is built by arginine 111, aspartate 154, arginine 157, arginine 160, and arginine 163.

The protein belongs to the tRNA nucleotidyltransferase/poly(A) polymerase family. Bacterial CCA-adding enzyme type 3 subfamily. In terms of assembly, homodimer. The cofactor is Mg(2+).

The catalysed reaction is a tRNA precursor + 2 CTP + ATP = a tRNA with a 3' CCA end + 3 diphosphate. The enzyme catalyses a tRNA with a 3' CCA end + 2 CTP + ATP = a tRNA with a 3' CCACCA end + 3 diphosphate. In terms of biological role, catalyzes the addition and repair of the essential 3'-terminal CCA sequence in tRNAs without using a nucleic acid template. Adds these three nucleotides in the order of C, C, and A to the tRNA nucleotide-73, using CTP and ATP as substrates and producing inorganic pyrophosphate. tRNA 3'-terminal CCA addition is required both for tRNA processing and repair. Also involved in tRNA surveillance by mediating tandem CCA addition to generate a CCACCA at the 3' terminus of unstable tRNAs. While stable tRNAs receive only 3'-terminal CCA, unstable tRNAs are marked with CCACCA and rapidly degraded. The chain is CCA-adding enzyme from Listeria innocua serovar 6a (strain ATCC BAA-680 / CLIP 11262).